We begin with the raw amino-acid sequence, 175 residues long: YIELAVVADHGMFTKYNSNVNTIRTWVHEMVNSLNGFFRSMXVDDASLVNLEVWSKTLTSFGEWRDLLPRISHDHAQLLTTIVFDQQTIGIAYTAGMCDPSQSVAVVMDHVAVTMAHELGHNLGMDHDDTCTCGAKSCIMASTISKGLSFEFSDCSQNQYQTYVTKHNPQCILNK.

One can recognise a Peptidase M12B domain in the interval 1–175 (YIELAVVADH…KHNPQCILNK (175 aa)). The Ca(2+) site is built by Glu3 and Asp74. 3 disulfide bridges follow: Cys98–Cys171, Cys131–Cys155, and Cys133–Cys138. Zn(2+) is bound at residue His117. Glu118 is an active-site residue. Residues His121 and His127 each coordinate Zn(2+). Cys171 and Asn174 together coordinate Ca(2+).

This sequence belongs to the venom metalloproteinase (M12B) family. P-I subfamily. In terms of assembly, monomer. Requires Zn(2+) as cofactor. In terms of tissue distribution, expressed by the venom gland.

It is found in the secreted. With respect to regulation, inhibited by EDTA, 1,10-phenanthroline and beta-mercaptoethanol. Not inhibited by the serine protease inhibitors aprotinin and benzamidin. Non-hemorrhagic snake venom zinc metalloprotease that hydrolyzes the Aalpha-chain of fibrinogen, more slowly the Bbeta-chain and shows no effect on the gamma chain. Has no coagulant activity on bovine plasma and fibrinogen. In Bothrops pauloensis (Neuwied's lancehead), this protein is Snake venom metalloproteinase BpMP-1.